Here is a 152-residue protein sequence, read N- to C-terminus: Transcriptional regulator MraZ (152 aa).

2 consecutive SpoVT-AbrB domains span residues 5 to 52 (ATTL…PLPE) and 81 to 124 (ADDC…NEDA).

The protein belongs to the MraZ family. As to quaternary structure, forms oligomers.

It localises to the cytoplasm. Its subcellular location is the nucleoid. The chain is Transcriptional regulator MraZ from Idiomarina loihiensis (strain ATCC BAA-735 / DSM 15497 / L2-TR).